A 76-amino-acid polypeptide reads, in one-letter code: cAMP-dependent protein kinase inhibitor alpha (76 aa).

Thr2 is subject to Blocked amino end (Thr). A disordered region spans residues 49 to 76 (KAEGEGDAQRNPSEQTGEAQGEAAKQES).

The protein belongs to the PKI family.

Extremely potent competitive inhibitor of cAMP-dependent protein kinase activity, this protein interacts with the catalytic subunit of the enzyme after the cAMP-induced dissociation of its regulatory chains. In Gallus gallus (Chicken), this protein is cAMP-dependent protein kinase inhibitor alpha (PKIA).